A 1360-amino-acid chain; its full sequence is DNA-directed RNA polymerase subunit beta (1360 aa).

The protein belongs to the RNA polymerase beta chain family. As to quaternary structure, the RNAP catalytic core consists of 2 alpha, 1 beta, 1 beta' and 1 omega subunit. When a sigma factor is associated with the core the holoenzyme is formed, which can initiate transcription.

The enzyme catalyses RNA(n) + a ribonucleoside 5'-triphosphate = RNA(n+1) + diphosphate. Functionally, DNA-dependent RNA polymerase catalyzes the transcription of DNA into RNA using the four ribonucleoside triphosphates as substrates. The chain is DNA-directed RNA polymerase subunit beta from Magnetococcus marinus (strain ATCC BAA-1437 / JCM 17883 / MC-1).